The primary structure comprises 476 residues: Nuclear envelope morphology protein 1 (476 aa).

A disordered region spans residues R47–E74. Over residues S51–S62 the composition is skewed to low complexity. Positions P64–E74 are enriched in basic and acidic residues. The helical transmembrane segment at F123–Y139 threads the bilayer. Disordered stretches follow at residues S164–N190 and G232–D256. Over residues A234–D256 the composition is skewed to polar residues. N-linked (GlcNAc...) asparagine glycans are attached at residues N237, N257, N284, and N356. Residues S299–L460 form the FCP1 homology domain.

This sequence belongs to the Dullard family. Component of the nem1-spo7 complex.

It is found in the endoplasmic reticulum membrane. It localises to the nucleus membrane. It carries out the reaction O-phospho-L-seryl-[protein] + H2O = L-seryl-[protein] + phosphate. It catalyses the reaction O-phospho-L-threonyl-[protein] + H2O = L-threonyl-[protein] + phosphate. Catalytic component of the nem1-spo7 complex which acts as a phosphatase and may be required for proper nuclear membrane morphology. The chain is Nuclear envelope morphology protein 1 (nem1) from Schizosaccharomyces pombe (strain 972 / ATCC 24843) (Fission yeast).